The sequence spans 923 residues: Protocadherin gamma-B4 (923 aa).

An N-terminal signal peptide occupies residues 1-30 (MGSGAGELGRAERLPVLFLFLLSLFCPALC). Cadherin domains lie at 31–133 (EQIR…TPKF), 134–242 (TQNS…APVF), 243–345 (SQDI…APEV), 346–450 (IFQS…APVF), 451–560 (SQSS…APRV), and 568–673 (DGSA…LPDI). At 31–689 (EQIRYRIPEE…SDLEAELQFY (659 aa)) the chain is on the extracellular side. N-linked (GlcNAc...) asparagine glycans are attached at residues N417 and N543. A helical membrane pass occupies residues 690 to 710 (LVVALALISVLFLVAMILAIA). At 711–923 (LRLRRSSSPA…KKKSGKKEKK (213 aa)) the chain is on the cytoplasmic side. 2 disordered regions span residues 797–832 (SHQQAPPNTDWRFSQAQRPGTSGSQNGDDTGTWPNN) and 893–923 (ATLTNAAGKRDGKAPAGGNGNKKKSGKKEKK). Residues 913–923 (NKKKSGKKEKK) are compositionally biased toward basic residues.

Its subcellular location is the cell membrane. Its function is as follows. Potential calcium-dependent cell-adhesion protein. May be involved in the establishment and maintenance of specific neuronal connections in the brain. In Pan troglodytes (Chimpanzee), this protein is Protocadherin gamma-B4 (PCDHGB4).